The chain runs to 61 residues: Mu-diguetoxin-Dc1c (61 aa).

3 cysteine pairs are disulfide-bonded: Cys-12–Cys-25, Cys-19–Cys-39, and Cys-24–Cys-53.

It belongs to the neurotoxin 26 (DTX) family. Expressed by the venom gland.

The protein resides in the secreted. In terms of biological role, acts by delaying the inactivation of presynaptic voltage-sensitive sodium channels (Nav). Acts against insects and causes a progressive spastic paralysis. This Diguetia canities (Desert bush spider) protein is Mu-diguetoxin-Dc1c.